The following is a 463-amino-acid chain: MRLYDTLSGGVRDFAPLRPGHVSIYLCGATVQGLPHIGHVRSGVAFDVLRRWLTAKGFDVAFIRNVTDIDDKILHKAADAGRPWWEWAATYERAFTAAYDALGVLPPSAEPRATGHITQMVELIERLIERGHAYTGDGDVYFSVATLPDYGKLSGHRIDDVHQGEGVATGKRDQRDFTLWKGAKPGEPSWPTPWGRGRPGWHTECVAMCESYLGAAFDIHAGGMDLVFPHHENEIAQAEAAGDGFARFWLHNGWVTMGGEKMSKSLGNVLAIPAVLQRVRAAELRYYLGSAHYRSMLEFSETALQDAAKAYAGIEDFLHRVRTRVGAVVPGEWTPKFGAALDDDLAVPAALAEVHAARAEGNRALDAGDHDTALTHAMSIRAMMGILGADPLDERWESRDETSAALAAVDVLVQAEVQRREDARARRDWAEADAIRDRLKEAGIEVTDTADGPQWSLLDGTDK.

C27 contacts Zn(2+). The 'HIGH' region signature appears at 29-39; sequence ATVQGLPHIGH. C205, H230, and E234 together coordinate Zn(2+). A 'KMSKS' region motif is present at residues 261-265; it reads KMSKS. K264 serves as a coordination point for ATP.

It belongs to the class-I aminoacyl-tRNA synthetase family. Monomer. Requires Zn(2+) as cofactor.

It localises to the cytoplasm. The catalysed reaction is tRNA(Cys) + L-cysteine + ATP = L-cysteinyl-tRNA(Cys) + AMP + diphosphate. The chain is Cysteine--tRNA ligase from Mycolicibacterium vanbaalenii (strain DSM 7251 / JCM 13017 / BCRC 16820 / KCTC 9966 / NRRL B-24157 / PYR-1) (Mycobacterium vanbaalenii).